A 176-amino-acid polypeptide reads, in one-letter code: ATP-dependent protease subunit HslV (176 aa).

The active site involves threonine 5. The Na(+) site is built by serine 161, cysteine 164, and threonine 167.

It belongs to the peptidase T1B family. HslV subfamily. A double ring-shaped homohexamer of HslV is capped on each side by a ring-shaped HslU homohexamer. The assembly of the HslU/HslV complex is dependent on binding of ATP.

It is found in the cytoplasm. The enzyme catalyses ATP-dependent cleavage of peptide bonds with broad specificity.. Its activity is regulated as follows. Allosterically activated by HslU binding. Functionally, protease subunit of a proteasome-like degradation complex believed to be a general protein degrading machinery. In Thermoanaerobacter pseudethanolicus (strain ATCC 33223 / 39E) (Clostridium thermohydrosulfuricum), this protein is ATP-dependent protease subunit HslV.